The sequence spans 387 residues: 3-ketoacyl-CoA thiolase (387 aa).

Residue C91 is the Acyl-thioester intermediate of the active site. Residues H343 and C373 each act as proton acceptor in the active site.

The protein belongs to the thiolase-like superfamily. Thiolase family. As to quaternary structure, heterotetramer of two alpha chains (FadB) and two beta chains (FadA).

Its subcellular location is the cytoplasm. The enzyme catalyses an acyl-CoA + acetyl-CoA = a 3-oxoacyl-CoA + CoA. The protein operates within lipid metabolism; fatty acid beta-oxidation. In terms of biological role, catalyzes the final step of fatty acid oxidation in which acetyl-CoA is released and the CoA ester of a fatty acid two carbons shorter is formed. This Vibrio vulnificus (strain YJ016) protein is 3-ketoacyl-CoA thiolase.